The chain runs to 202 residues: Securin (202 aa).

The disordered stretch occupies residues 1–92 (MATLIYVDKE…QKQPSFSAKK (92 aa)). Position 2 is an N-acetylalanine (Ala2). The short motif at 61-64 (RKAL) is the D-box element. Short sequence motifs (TEK-box) lie at residues 71-73 (TEK) and 94-96 (TEK). The short motif at 163–173 (XPSPVKMPSPP) is the SH3-binding element. Ser165 is subject to Phosphoserine; by CDK1.

This sequence belongs to the securin family. Interacts with RPS10 and DNAJA1. Interacts with the caspase-like ESPL1, and prevents its protease activity probably by covering its active site. Interacts with TP53 and blocks its activity probably by blocking its binding to DNA. Interacts with the Ku 70 kDa subunit of ds-DNA kinase. Interacts with PTTG1IP. In terms of processing, phosphorylated at Ser-165 by CDK1 during mitosis. Phosphorylated in vitro by ds-DNA kinase. Post-translationally, ubiquitinated through 'Lys-11' linkage of ubiquitin moieties by the anaphase promoting complex (APC) at the onset of anaphase, conducting to its degradation. 'Lys-11'-linked ubiquitination is mediated by the E2 ligase UBE2C/UBCH10.

The protein localises to the cytoplasm. Its subcellular location is the nucleus. Regulatory protein, which plays a central role in chromosome stability, in the p53/TP53 pathway, and DNA repair. Probably acts by blocking the action of key proteins. During the mitosis, it blocks Separase/ESPL1 function, preventing the proteolysis of the cohesin complex and the subsequent segregation of the chromosomes. At the onset of anaphase, it is ubiquitinated, conducting to its destruction and to the liberation of ESPL1. Its function is however not limited to a blocking activity, since it is required to activate ESPL1. Negatively regulates the transcriptional activity and related apoptosis activity of TP53. The negative regulation of TP53 may explain the strong transforming capability of the protein when it is overexpressed. May also play a role in DNA repair via its interaction with Ku, possibly by connecting DNA damage-response pathways with sister chromatid separation. The chain is Securin (PTTG1) from Pan troglodytes (Chimpanzee).